We begin with the raw amino-acid sequence, 290 residues long: Shikimate dehydrogenase (NADP(+)) (290 aa).

Shikimate is bound by residues S24 to S26 and T71. K75 acts as the Proton acceptor in catalysis. Shikimate-binding residues include N96 and D111. NADP(+)-binding positions include G135–A139, N159–R164, and I228. A shikimate-binding site is contributed by Y230. G251 provides a ligand contact to NADP(+).

It belongs to the shikimate dehydrogenase family. Homodimer.

It carries out the reaction shikimate + NADP(+) = 3-dehydroshikimate + NADPH + H(+). The protein operates within metabolic intermediate biosynthesis; chorismate biosynthesis; chorismate from D-erythrose 4-phosphate and phosphoenolpyruvate: step 4/7. In terms of biological role, involved in the biosynthesis of the chorismate, which leads to the biosynthesis of aromatic amino acids. Catalyzes the reversible NADPH linked reduction of 3-dehydroshikimate (DHSA) to yield shikimate (SA). The chain is Shikimate dehydrogenase (NADP(+)) from Bartonella tribocorum (strain CIP 105476 / IBS 506).